The following is a 742-amino-acid chain: Synaptic vesicle glycoprotein 2A (742 aa).

An interaction with SYT1 region spans residues 1-57 (MEEGFRDRAAFIRGAKDIAKEVKKHAAKKVVKGLDRVQDEYSRRSYSRFEEEDDDDD). Residues 1 to 169 (MEEGFRDRAA…GHGRFQWTLY (169 aa)) lie on the Cytoplasmic side of the membrane. Positions 33 to 49 (GLDRVQDEYSRRSYSRF) are enriched in basic and acidic residues. The interval 33–144 (GLDRVQDEYS…GRGEAQRRKE (112 aa)) is disordered. Phosphoserine is present on residues S80 and S81. T84 bears the Phosphothreonine mark. Gly residues predominate over residues 122–137 (VRGGLSDGEGPPGGRG). The residue at position 127 (S127) is a Phosphoserine. A helical transmembrane segment spans residues 170–190 (FVLGLALMADGVEVFVVGFVL). The Extracellular segment spans residues 191–205 (PSAEKDMCLSDSNKG). A helical membrane pass occupies residues 206–226 (MLGLIVYLGMMVGAFLWGGLA). Over 227–233 (DRLGRRQ) the chain is Cytoplasmic. Residues 234–254 (CLLISLSVNSVFAFFSSFVQG) form a helical membrane-spanning segment. The Extracellular portion of the chain corresponds to 255-262 (YGTFLFCR). The helical transmembrane segment at 263 to 283 (LLSGVGIGGSIPIVFSYFSEF) threads the bilayer. At 284–294 (LAQEKRGEHLS) the chain is on the cytoplasmic side. A helical transmembrane segment spans residues 295–315 (WLCMFWMIGGVYAAAMAWAII). Residues 316-334 (PHYGWSFQMGSAYQFHSWR) are Extracellular-facing. The helical transmembrane segment at 335-355 (VFVLVCAFPSVFAIGALTTQP) threads the bilayer. The Cytoplasmic segment spans residues 356–447 (ESPRFFLENG…CFGPEYRRIT (92 aa)). S393 is subject to Phosphoserine. The helical transmembrane segment at 448–468 (LMMMGVWFTMSFSYYGLTVWF) threads the bilayer. At 469 to 598 (PDMIRHLQAV…GTGEGAYMVY (130 aa)) the chain is on the extracellular side. Phosphotyrosine is present on Y480. N-linked (GlcNAc...) asparagine glycosylation is found at N498, N548, and N573. A helical transmembrane segment spans residues 599–619 (FVSFLGTLAVLPGNIVSALLM). Topologically, residues 620-626 (DKIGRLR) are cytoplasmic. A helical membrane pass occupies residues 627–647 (MLAGSSVMSCVSCFFLSFGNS). The Extracellular segment spans residues 648–651 (ESAM). A helical transmembrane segment spans residues 652–672 (IALLCLFGGVSIASWNALDVL). Residues 673-690 (TVGLYPSDKRTTAFGFLN) lie on the Cytoplasmic side of the membrane. A helical transmembrane segment spans residues 691 to 711 (ALCKLAAVLGISIFTSFVGIT). Position 712 (K712) is a topological domain, extracellular. Residues 713-733 (AAPIPFASAALALGSSLALKL) form a helical membrane-spanning segment. Over 734-742 (PETRGQVLQ) the chain is Cytoplasmic.

Belongs to the major facilitator superfamily. As to quaternary structure, interacts with SYT1/synaptotagmin-1 in a calcium-dependent manner. Binds the adapter protein complex AP-2. Phosphorylation by CK1 of the N-terminal cytoplasmic domain regulates interaction with SYT1. Post-translationally, N-glycosylated.

The protein resides in the presynapse. It localises to the cytoplasmic vesicle. It is found in the secretory vesicle. Its subcellular location is the synaptic vesicle membrane. Plays a role in the control of regulated secretion in neural and endocrine cells, enhancing selectively low-frequency neurotransmission. Positively regulates vesicle fusion by maintaining the readily releasable pool of secretory vesicles. This chain is Synaptic vesicle glycoprotein 2A (SV2A), found in Macaca fascicularis (Crab-eating macaque).